A 241-amino-acid chain; its full sequence is 1-(5-phosphoribosyl)-5-[(5-phosphoribosylamino)methylideneamino] imidazole-4-carboxamide isomerase (241 aa).

Residue Asp-8 is the Proton acceptor of the active site. Asp-129 (proton donor) is an active-site residue.

Belongs to the HisA/HisF family.

It is found in the cytoplasm. The enzyme catalyses 1-(5-phospho-beta-D-ribosyl)-5-[(5-phospho-beta-D-ribosylamino)methylideneamino]imidazole-4-carboxamide = 5-[(5-phospho-1-deoxy-D-ribulos-1-ylimino)methylamino]-1-(5-phospho-beta-D-ribosyl)imidazole-4-carboxamide. The protein operates within amino-acid biosynthesis; L-histidine biosynthesis; L-histidine from 5-phospho-alpha-D-ribose 1-diphosphate: step 4/9. In Rhodospirillum rubrum (strain ATCC 11170 / ATH 1.1.1 / DSM 467 / LMG 4362 / NCIMB 8255 / S1), this protein is 1-(5-phosphoribosyl)-5-[(5-phosphoribosylamino)methylideneamino] imidazole-4-carboxamide isomerase.